Reading from the N-terminus, the 199-residue chain is Pyridoxal 5'-phosphate synthase subunit PdxT (199 aa).

47 to 49 contributes to the L-glutamine binding site; that stretch reads GES. The active-site Nucleophile is the Cys79. Residues Arg106 and 133–134 contribute to the L-glutamine site; that span reads IR. Residues His169 and Glu171 each act as charge relay system in the active site.

The protein belongs to the glutaminase PdxT/SNO family. In the presence of PdxS, forms a dodecamer of heterodimers. Only shows activity in the heterodimer.

The catalysed reaction is aldehydo-D-ribose 5-phosphate + D-glyceraldehyde 3-phosphate + L-glutamine = pyridoxal 5'-phosphate + L-glutamate + phosphate + 3 H2O + H(+). The enzyme catalyses L-glutamine + H2O = L-glutamate + NH4(+). It functions in the pathway cofactor biosynthesis; pyridoxal 5'-phosphate biosynthesis. In terms of biological role, catalyzes the hydrolysis of glutamine to glutamate and ammonia as part of the biosynthesis of pyridoxal 5'-phosphate. The resulting ammonia molecule is channeled to the active site of PdxS. This is Pyridoxal 5'-phosphate synthase subunit PdxT from Desulfitobacterium hafniense (strain Y51).